The sequence spans 220 residues: Deoxyribose-phosphate aldolase 1 (220 aa).

The Proton donor/acceptor role is filled by Asp89. Residue Lys151 is the Schiff-base intermediate with acetaldehyde of the active site. The Proton donor/acceptor role is filled by Lys180.

This sequence belongs to the DeoC/FbaB aldolase family. DeoC type 1 subfamily.

It is found in the cytoplasm. It catalyses the reaction 2-deoxy-D-ribose 5-phosphate = D-glyceraldehyde 3-phosphate + acetaldehyde. It functions in the pathway carbohydrate degradation; 2-deoxy-D-ribose 1-phosphate degradation; D-glyceraldehyde 3-phosphate and acetaldehyde from 2-deoxy-alpha-D-ribose 1-phosphate: step 2/2. Catalyzes a reversible aldol reaction between acetaldehyde and D-glyceraldehyde 3-phosphate to generate 2-deoxy-D-ribose 5-phosphate. In Staphylococcus aureus (strain MSSA476), this protein is Deoxyribose-phosphate aldolase 1.